The following is a 244-amino-acid chain: MNGISNALNGLYDISGVEVGQHFYWQIAGFQVHAQVLITSWVVIAILLGSAVIAVRNPQTIPTAGQNFFEYVLEFIRDVSKTQIGEEYGPWVPFIGTMFLFIFVSNWSGALLPWKIIQLPHGELAAPTNDINTTVALALLTSVAYFYAGLSKKGLGYFSKYIQPTPILLPINILEDFTKPLSLSFRLFGNILADELVVVVLVSLVPSVVPIPVMFLGLFTSGIQALIFATLAAAYIGESMEGHH.

5 consecutive transmembrane segments (helical) span residues 35-55, 92-112, 131-151, 196-216, and 217-237; these read QVLI…VIAV, VPFI…GALL, INTT…AGLS, LVVV…VMFL, and GLFT…AYIG.

Belongs to the ATPase A chain family. As to quaternary structure, F-type ATPases have 2 components, CF(1) - the catalytic core - and CF(0) - the membrane proton channel. CF(1) has five subunits: alpha(3), beta(3), gamma(1), delta(1), epsilon(1). CF(0) has four main subunits: a, b, b' and c.

The protein resides in the plastid. The protein localises to the chloroplast thylakoid membrane. Key component of the proton channel; it plays a direct role in the translocation of protons across the membrane. The chain is ATP synthase subunit a, chloroplastic from Gossypium hirsutum (Upland cotton).